A 400-amino-acid polypeptide reads, in one-letter code: MGVLMSKRQTVEQVQKVSLAVSAFKDGLRDRPSIRRTGELPGSRRGTVEGSVQEVQEEKEAEAGTSVVQEESSAGRAAWERLRDGRGVEPEEFDRTGRFTPPAFIRPTRKLDDDKPPEICLEPREPVVNDEMCDVCEVWTAESLFPCRVCTRVFHDGCLRRMGYIQGDSAAEVMEMAHTETGWSCHYCDNINLLLTEEEMYSLTETFQRCKVIPDCSLTLEDFLRYRHQAAKRGDRDRALSEEQEEQAARQFAALDPEHRGYIEWSDFLSHESLLLLQQLRPQNSLLRLLTVKERERARATFLARGSGSTISEAECRRAQHSWFCKRFPEAPSCSVSISHVGPIADSSPASSSSKSQDKTLLPTEQESRFVDWPTFLQENVLYILAARPNSAAIHLKPPG.

The N-myristoyl glycine moiety is linked to residue Gly2. A disordered region spans residues 30–108; sequence DRPSIRRTGE…FTPPAFIRPT (79 aa). Position 36 is an omega-N-methylarginine (Arg36). Residue Ser43 is modified to Phosphoserine. Residue Thr47 is modified to Phosphothreonine. Ser51 carries the phosphoserine modification. Basic and acidic residues predominate over residues 78–97; it reads AWERLRDGRGVEPEEFDRTG. A PHD-type zinc finger spans residues 129–190; that stretch reads NDEMCDVCEV…TGWSCHYCDN (62 aa).

The sequence is that of PHD finger protein 24 from Pongo abelii (Sumatran orangutan).